The following is a 150-amino-acid chain: 2-aminobenzenesulfonate 2,3-dioxygenase subunit beta (150 aa).

Belongs to the bacterial ring-hydroxylating dioxygenase beta subunit family. As to quaternary structure, heterotetramer with a alpha2beta2 structure.

The catalysed reaction is 2-aminobenzenesulfonate + NADH + O2 + 2 H(+) = 2,3-dihydroxybenzenesulfonate + NH4(+) + NAD(+). Inhibited by o-phenanthroline. Functionally, beta subunit of the oxygenase component of the 2-aminobenzenesulfonate 2,3-dioxygenase system (deaminating) (ABSDOS). Can use 2-aminobenzenesulfonate (ABS), benzenesulfonate (BS), 4-toluenesulfonate (TS), 2-nitrobenzenesulfonate, 3- and 4-aminobenzenesulfonates, 4-chloro- and 4-hydroxybenzenesulfonates and pyridine-3-sulfonate as substrates. No desulfonation of ABS to aminocatechol or aminophenol detected. The chain is 2-aminobenzenesulfonate 2,3-dioxygenase subunit beta from Alcaligenes sp.